Here is a 401-residue protein sequence, read N- to C-terminus: MPKVVLAYSGGLDTSVIIAWLKENYGYEVIAVTADLGQGEELAPLEEKALQSGASKIYIEDLRKEFVEDYIWPTLKAGAIYEGKYLLGTSFARPLIAKKLVEIAEKEGAVAVAHGATGKGNDQVRFELGVKALAPHLKVIAPWREWDIRSREDAIDYAEARGIPVPVTKKSIYSRDRNIWHISHEGGELESPANAASYDMLMLTVPPEKAPDQPTYVEIGFEKGIPVSINGELMDSIGLLEKLNVIGGENGIGIVDMVENRLVGMKSRGVYETPGGAILVYAHRELELLTLDRATLHYKEQIALRYAELVYDGVWFAPLREALDAFVDNTQRTVTGTVKLKLYKGNMMPAGVTSPYSLYDEELSTFGRDEVYNQADAAGFINLFGLPLKVRAMMEKKAGLR.

Residues 7-15 (AYSGGLDTS) and A34 contribute to the ATP site. Residues Y85 and S90 each coordinate L-citrulline. G115 contributes to the ATP binding site. L-aspartate contacts are provided by T117, N121, and D122. N121 contacts L-citrulline. L-citrulline is bound by residues R125, S174, S183, E259, and Y271.

The protein belongs to the argininosuccinate synthase family. Type 1 subfamily. In terms of assembly, homotetramer.

It localises to the cytoplasm. The enzyme catalyses L-citrulline + L-aspartate + ATP = 2-(N(omega)-L-arginino)succinate + AMP + diphosphate + H(+). It participates in amino-acid biosynthesis; L-arginine biosynthesis; L-arginine from L-ornithine and carbamoyl phosphate: step 2/3. This chain is Argininosuccinate synthase, found in Desulforamulus reducens (strain ATCC BAA-1160 / DSM 100696 / MI-1) (Desulfotomaculum reducens).